A 127-amino-acid chain; its full sequence is Small ribosomal subunit protein uS12 (127 aa).

3-methylthioaspartic acid is present on aspartate 89. The segment at 101 to 127 is disordered; the sequence is ALDTSGVAGRTQRRSKYGAKRPKEAKK. The segment covering 111–127 has biased composition (basic residues); the sequence is TQRRSKYGAKRPKEAKK.

The protein belongs to the universal ribosomal protein uS12 family. As to quaternary structure, part of the 30S ribosomal subunit. Contacts proteins S8 and S17. May interact with IF1 in the 30S initiation complex.

Functionally, with S4 and S5 plays an important role in translational accuracy. Its function is as follows. Interacts with and stabilizes bases of the 16S rRNA that are involved in tRNA selection in the A site and with the mRNA backbone. Located at the interface of the 30S and 50S subunits, it traverses the body of the 30S subunit contacting proteins on the other side and probably holding the rRNA structure together. The combined cluster of proteins S8, S12 and S17 appears to hold together the shoulder and platform of the 30S subunit. This Flavobacterium johnsoniae (strain ATCC 17061 / DSM 2064 / JCM 8514 / BCRC 14874 / CCUG 350202 / NBRC 14942 / NCIMB 11054 / UW101) (Cytophaga johnsonae) protein is Small ribosomal subunit protein uS12.